Consider the following 399-residue polypeptide: 4-hydroxy-3-methylbut-2-enyl diphosphate reductase (399 aa).

Cys-66 provides a ligand contact to [4Fe-4S] cluster. His-96 provides a ligand contact to (2E)-4-hydroxy-3-methylbut-2-enyl diphosphate. His-96 contacts dimethylallyl diphosphate. His-96 is an isopentenyl diphosphate binding site. Residue Cys-157 coordinates [4Fe-4S] cluster. His-185 contributes to the (2E)-4-hydroxy-3-methylbut-2-enyl diphosphate binding site. His-185 serves as a coordination point for dimethylallyl diphosphate. His-185 serves as a coordination point for isopentenyl diphosphate. Glu-187 acts as the Proton donor in catalysis. Thr-250 is a (2E)-4-hydroxy-3-methylbut-2-enyl diphosphate binding site. Cys-288 is a [4Fe-4S] cluster binding site. Residues Ser-317, Ser-318, Asn-319, and Ser-380 each contribute to the (2E)-4-hydroxy-3-methylbut-2-enyl diphosphate site. The dimethylallyl diphosphate site is built by Ser-317, Ser-318, Asn-319, and Ser-380. Isopentenyl diphosphate contacts are provided by Ser-317, Ser-318, Asn-319, and Ser-380.

It belongs to the IspH family. Requires [4Fe-4S] cluster as cofactor.

The enzyme catalyses isopentenyl diphosphate + 2 oxidized [2Fe-2S]-[ferredoxin] + H2O = (2E)-4-hydroxy-3-methylbut-2-enyl diphosphate + 2 reduced [2Fe-2S]-[ferredoxin] + 2 H(+). It carries out the reaction dimethylallyl diphosphate + 2 oxidized [2Fe-2S]-[ferredoxin] + H2O = (2E)-4-hydroxy-3-methylbut-2-enyl diphosphate + 2 reduced [2Fe-2S]-[ferredoxin] + 2 H(+). It functions in the pathway isoprenoid biosynthesis; dimethylallyl diphosphate biosynthesis; dimethylallyl diphosphate from (2E)-4-hydroxy-3-methylbutenyl diphosphate: step 1/1. Its pathway is isoprenoid biosynthesis; isopentenyl diphosphate biosynthesis via DXP pathway; isopentenyl diphosphate from 1-deoxy-D-xylulose 5-phosphate: step 6/6. Catalyzes the conversion of 1-hydroxy-2-methyl-2-(E)-butenyl 4-diphosphate (HMBPP) into a mixture of isopentenyl diphosphate (IPP) and dimethylallyl diphosphate (DMAPP). Acts in the terminal step of the DOXP/MEP pathway for isoprenoid precursor biosynthesis. This is 4-hydroxy-3-methylbut-2-enyl diphosphate reductase from Synechococcus sp. (strain CC9902).